A 352-amino-acid polypeptide reads, in one-letter code: Septin-2B (352 aa).

In terms of domain architecture, Septin-type G spans Lys-33–Lys-305. The G1 motif stretch occupies residues Gly-43–Ser-50. GTP contacts are provided by residues Gly-43–Ser-50, Thr-77, Gly-103, Lys-182–Glu-190, Gly-240, and Arg-255. A G3 motif region spans residues Asp-100–Gly-103. The G4 motif stretch occupies residues Ala-181 to Asp-184. Residues Trp-259–His-269 are important for dimerization.

It belongs to the TRAFAC class TrmE-Era-EngA-EngB-Septin-like GTPase superfamily. Septin GTPase family. Septins polymerize into heterooligomeric protein complexes that form filaments, and associate with cellular membranes, actin filaments and microtubules. GTPase activity is required for filament formation. Can form heterooligomers with other family members and form filaments. Interacts with wdpcp.

The protein resides in the cytoplasm. The protein localises to the cytoskeleton. It is found in the spindle. It localises to the cleavage furrow. Its subcellular location is the midbody. The protein resides in the cell projection. The protein localises to the cilium membrane. Functionally, filament-forming cytoskeletal GTPase. Required for normal organization of the actin cytoskeleton. Plays a role in the biogenesis of polarized columnar-shaped epithelium. Required for the progression through mitosis through regulation of chromosome congression. During anaphase, may be required for chromosome segregation and spindle elongation. Probably plays a role in ciliogenesis and collective cell movements including convergent extension during gastrulation. In cilia, required for the integrity of the diffusion barrier at the base of the primary cilium that prevents diffusion of transmembrane proteins between the cilia and plasma membranes. Controls cell shape and not polarization of cells during convergent extension. The sequence is that of Septin-2B (sept2-b) from Xenopus laevis (African clawed frog).